The sequence spans 293 residues: Formamidopyrimidine-DNA glycosylase (293 aa).

Pro2 functions as the Schiff-base intermediate with DNA in the catalytic mechanism. Glu3 serves as the catalytic Proton donor. Catalysis depends on Lys58, which acts as the Proton donor; for beta-elimination activity. DNA-binding residues include His104, Arg123, and Lys166. The FPG-type zinc finger occupies 257-293; it reads AVYDRESEPCRTKGCGGVVKRFVQNGRSTFCCPKCQK. The active-site Proton donor; for delta-elimination activity is the Arg283.

Belongs to the FPG family. As to quaternary structure, monomer. Zn(2+) serves as cofactor.

The enzyme catalyses Hydrolysis of DNA containing ring-opened 7-methylguanine residues, releasing 2,6-diamino-4-hydroxy-5-(N-methyl)formamidopyrimidine.. It catalyses the reaction 2'-deoxyribonucleotide-(2'-deoxyribose 5'-phosphate)-2'-deoxyribonucleotide-DNA = a 3'-end 2'-deoxyribonucleotide-(2,3-dehydro-2,3-deoxyribose 5'-phosphate)-DNA + a 5'-end 5'-phospho-2'-deoxyribonucleoside-DNA + H(+). Involved in base excision repair of DNA damaged by oxidation or by mutagenic agents. Acts as a DNA glycosylase that recognizes and removes damaged bases. Has a preference for oxidized purines, such as 7,8-dihydro-8-oxoguanine (8-oxoG). Has AP (apurinic/apyrimidinic) lyase activity and introduces nicks in the DNA strand. Cleaves the DNA backbone by beta-delta elimination to generate a single-strand break at the site of the removed base with both 3'- and 5'-phosphates. In Rhodopseudomonas palustris (strain BisA53), this protein is Formamidopyrimidine-DNA glycosylase.